A 161-amino-acid polypeptide reads, in one-letter code: Cytochrome c-type biogenesis protein CcmE (161 aa).

The Cytoplasmic portion of the chain corresponds to 1-13 (MSWLPKSPKARRR). A helical; Signal-anchor for type II membrane protein membrane pass occupies residues 14–34 (LMLVAAIAPVLAVAAGLTLWG). Over 35 to 161 (LSDSISFFYT…QRPEHQGDAL (127 aa)) the chain is Periplasmic. Heme is bound by residues H128 and Y132.

The protein belongs to the CcmE/CycJ family.

It is found in the cell inner membrane. Functionally, heme chaperone required for the biogenesis of c-type cytochromes. Transiently binds heme delivered by CcmC and transfers the heme to apo-cytochromes in a process facilitated by CcmF and CcmH. In Phenylobacterium zucineum (strain HLK1), this protein is Cytochrome c-type biogenesis protein CcmE.